The primary structure comprises 395 residues: MPLRSTFTRFFQLEAASGLLLIAAAILALIINNSPLSWLYNGLLDTPVVAQIGALKIAKPLLLWINDGLMALFFLLIGLEVKREVLDGQLSKPSQIVLPGAAAIGGMLVPALIYWFLNRDNPAALDGWAIPTATDIAFALGVLALLGKRVPVSLKLFLMTLAIIDDLGAIVIIAIFYSGELSTLSLGLAAACIAALVAMNRLGVVKLGPYMIIGLILWVCVLKSGVHATLAGVTLAFCIPLRTKNAEPSPLLTLEHALHPWVAYGILPLFAFANAGLSLSGVTVESFTHHVPMGIAVGLLLGKTLGVFGLTWLAVKTGIAALPQGANWGQVLGVAILCGIGFTMSLFVGSLAFVPGASEYAGMDRMGILTGSVFAALIGYAVTAAASRKNTALPS.

11 helical membrane passes run 11 to 31 (FQLE…ALII), 61 to 81 (LLLW…GLEV), 96 to 116 (IVLP…IYWF), 127 to 147 (GWAI…ALLG), 156 to 176 (LFLM…IAIF), 179 to 199 (GELS…LVAM), 215 to 237 (LILW…TLAF), 262 to 282 (VAYG…LSGV), 295 to 315 (IAVG…WLAV), 334 to 354 (VAIL…LAFV), and 366 to 386 (MGIL…TAAA).

It belongs to the NhaA Na(+)/H(+) (TC 2.A.33) antiporter family.

It localises to the cell inner membrane. The catalysed reaction is Na(+)(in) + 2 H(+)(out) = Na(+)(out) + 2 H(+)(in). Its function is as follows. Na(+)/H(+) antiporter that extrudes sodium in exchange for external protons. The polypeptide is Na(+)/H(+) antiporter NhaA (Pseudomonas fluorescens (strain Pf0-1)).